The following is a 129-amino-acid chain: Small ribosomal subunit protein uS13 (129 aa).

The segment at 96-129 (GLPVRGQRTSTNARTRKGPRKTVGVSKAAAAAKA) is disordered.

This sequence belongs to the universal ribosomal protein uS13 family. In terms of assembly, part of the 30S ribosomal subunit. Forms a loose heterodimer with protein S19. Forms two bridges to the 50S subunit in the 70S ribosome.

Located at the top of the head of the 30S subunit, it contacts several helices of the 16S rRNA. In the 70S ribosome it contacts the 23S rRNA (bridge B1a) and protein L5 of the 50S subunit (bridge B1b), connecting the 2 subunits; these bridges are implicated in subunit movement. Contacts the tRNAs in the A and P-sites. The protein is Small ribosomal subunit protein uS13 of Opitutus terrae (strain DSM 11246 / JCM 15787 / PB90-1).